The primary structure comprises 591 residues: Aspartate--tRNA(Asp/Asn) ligase (591 aa).

Position 176 (E176) interacts with L-aspartate. The aspartate stretch occupies residues 200–203 (QLFK). R222 is an L-aspartate binding site. ATP-binding positions include 222–224 (RDE) and Q231. An L-aspartate-binding site is contributed by H450. E484 contacts ATP. Residue R491 coordinates L-aspartate. Position 536–539 (536–539 (GLDR)) interacts with ATP.

It belongs to the class-II aminoacyl-tRNA synthetase family. Type 1 subfamily. In terms of assembly, homodimer.

The protein localises to the cytoplasm. The enzyme catalyses tRNA(Asx) + L-aspartate + ATP = L-aspartyl-tRNA(Asx) + AMP + diphosphate. Aspartyl-tRNA synthetase with relaxed tRNA specificity since it is able to aspartylate not only its cognate tRNA(Asp) but also tRNA(Asn). Reaction proceeds in two steps: L-aspartate is first activated by ATP to form Asp-AMP and then transferred to the acceptor end of tRNA(Asp/Asn). In Bacillus mycoides (strain KBAB4) (Bacillus weihenstephanensis), this protein is Aspartate--tRNA(Asp/Asn) ligase.